A 367-amino-acid chain; its full sequence is 5-amino-6-(D-ribitylamino)uracil--L-tyrosine 4-hydroxyphenyl transferase (367 aa).

One can recognise a Radical SAM core domain in the interval 54–288 (ITYIENWNIN…VYAISRLMFR (235 aa)). [4Fe-4S] cluster contacts are provided by cysteine 68, cysteine 72, and cysteine 75.

The protein belongs to the radical SAM superfamily. CofH family. In terms of assembly, consists of two subunits, CofG and CofH. The cofactor is [4Fe-4S] cluster.

The catalysed reaction is 5-amino-6-(D-ribitylamino)uracil + L-tyrosine + S-adenosyl-L-methionine = 5-amino-5-(4-hydroxybenzyl)-6-(D-ribitylimino)-5,6-dihydrouracil + 2-iminoacetate + 5'-deoxyadenosine + L-methionine + H(+). Its pathway is cofactor biosynthesis; coenzyme F0 biosynthesis. Catalyzes the radical-mediated synthesis of 5-amino-5-(4-hydroxybenzyl)-6-(D-ribitylimino)-5,6-dihydrouracil from 5-amino-6-(D-ribitylamino)uracil and L-tyrosine. The protein is 5-amino-6-(D-ribitylamino)uracil--L-tyrosine 4-hydroxyphenyl transferase of Methanothermobacter thermautotrophicus (strain ATCC 29096 / DSM 1053 / JCM 10044 / NBRC 100330 / Delta H) (Methanobacterium thermoautotrophicum).